Consider the following 297-residue polypeptide: Cell division protein ZipA (297 aa).

Position 1 (methionine 1) is a topological domain, periplasmic. A helical transmembrane segment spans residues 2–22 (EIGLREWLILIGIIVIAGILF). Residues 23–297 (DGWRRMRGGK…FERRALTQKR (275 aa)) are Cytoplasmic-facing. The disordered stretch occupies residues 48–150 (DEEGGSAEVL…GAAPASSSVK (103 aa)). Positions 83–92 (ARDREREPKP) are enriched in basic and acidic residues. The segment covering 124 to 133 (LFADSDDDFA) has biased composition (acidic residues). Residues 136-149 (NNRSSGAAPASSSV) are compositionally biased toward polar residues.

The protein belongs to the ZipA family. As to quaternary structure, interacts with FtsZ via their C-terminal domains.

The protein resides in the cell inner membrane. Functionally, essential cell division protein that stabilizes the FtsZ protofilaments by cross-linking them and that serves as a cytoplasmic membrane anchor for the Z ring. Also required for the recruitment to the septal ring of downstream cell division proteins. This is Cell division protein ZipA from Pseudomonas putida (strain ATCC 700007 / DSM 6899 / JCM 31910 / BCRC 17059 / LMG 24140 / F1).